The primary structure comprises 366 residues: Ribosomal RNA large subunit methyltransferase M (366 aa).

Residues Ser188, 221–224 (CPGG), Asp240, Asp260, and Asp277 contribute to the S-adenosyl-L-methionine site. Lys306 serves as the catalytic Proton acceptor.

Belongs to the class I-like SAM-binding methyltransferase superfamily. RNA methyltransferase RlmE family. RlmM subfamily. Monomer.

Its subcellular location is the cytoplasm. The catalysed reaction is cytidine(2498) in 23S rRNA + S-adenosyl-L-methionine = 2'-O-methylcytidine(2498) in 23S rRNA + S-adenosyl-L-homocysteine + H(+). Catalyzes the 2'-O-methylation at nucleotide C2498 in 23S rRNA. This chain is Ribosomal RNA large subunit methyltransferase M, found in Salmonella gallinarum (strain 287/91 / NCTC 13346).